The primary structure comprises 197 residues: Ribonuclease HII (197 aa).

Residues 9–197 form the RNase H type-2 domain; the sequence is ELIAGVDEVG…APVKKALEQF (189 aa). Positions 15, 16, and 107 each coordinate a divalent metal cation.

Belongs to the RNase HII family. It depends on Mn(2+) as a cofactor. The cofactor is Mg(2+).

The protein resides in the cytoplasm. The catalysed reaction is Endonucleolytic cleavage to 5'-phosphomonoester.. In terms of biological role, endonuclease that specifically degrades the RNA of RNA-DNA hybrids. The polypeptide is Ribonuclease HII (Haemophilus influenzae (strain 86-028NP)).